Consider the following 221-residue polypeptide: Very-long-chain (3R)-3-hydroxyacyl-CoA dehydratase PASTICCINO 2 (221 aa).

Over 1–11 (MAGFLSVVRRV) the chain is Cytoplasmic. Residues 12-32 (YLTLYNWIVFAGWAQVLYLAI) form a helical membrane-spanning segment. Over 33 to 51 (TTLKETGYENVYDAIEKPL) the chain is Lumenal. The chain crosses the membrane as a helical span at residues 52 to 70 (QLAQTAAVLEILHGLVGLV). Over 71–76 (RSPVSA) the chain is Cytoplasmic. Residues 77–95 (TLPQIGSRLFLTWGILYSF) traverse the membrane as a helical segment. Over 96 to 100 (PEVRS) the chain is Lumenal. A helical transmembrane segment spans residues 101–122 (HFLVTSLVISWSITEIIRYSFF). Over 123-142 (GFKEALGFAPSWHLWLRYSS) the chain is Cytoplasmic. A helical membrane pass occupies residues 143–165 (FLLLYPTGITSEVGLIYLALPHI). Residues Tyr147 and Glu154 contribute to the active site. At 166-184 (KTSEMYSVRMPNILNFSFD) the chain is on the lumenal side. The chain crosses the membrane as a helical span at residues 185-204 (FFYATILVLAIYVPGSPHMY). Residues 205 to 221 (RYMLGQRKRALSKSKRE) lie on the Cytoplasmic side of the membrane.

Belongs to the very long-chain fatty acids dehydratase HACD family. In terms of assembly, interacts with CDKA-1; but only with the 'Tyr-15' phosphorylated protein. Interacts with PAS1. Part of the fatty acid elongase complex which contains a beta-ketoacyl-CoA synthase (KCS), a beta-ketoacyl-CoA reductase (KCR), a beta-hydroxyacyl-CoA dehydratase (HCD) and an enoyl-CoA reductase (ECR). As to expression, high expression in young seedlings, roots, root tips, flowers and young siliques. Lower levels in leaves and stems.

The protein resides in the endoplasmic reticulum membrane. The protein localises to the cytoplasm. Its subcellular location is the nucleus. The enzyme catalyses a very-long-chain (3R)-3-hydroxyacyl-CoA = a very-long-chain (2E)-enoyl-CoA + H2O. The protein operates within lipid metabolism; fatty acid biosynthesis. In terms of biological role, catalyzes the third of the four reactions of the long-chain fatty acids elongation cycle. This endoplasmic reticulum-bound enzymatic process, allows the addition of two carbons to the chain of long- and very long-chain fatty acids/VLCFAs per cycle. This enzyme catalyzes the dehydration of the 3-hydroxyacyl-CoA intermediate into trans-2,3-enoyl-CoA, within each cycle of fatty acid elongation. Thereby, it participates in the production of VLCFAs of different chain lengths that are involved in multiple biological processes as precursors of membrane lipids and lipid mediators. May be an anti-phosphatase that prevents CDKA-1 dephosphorylation and activation. Involved in the hormonal control of cell division and differentiation. Required for proliferation control of meristematic and non-meristematic cells. Negative regulator of the cell cycle. The protein is Very-long-chain (3R)-3-hydroxyacyl-CoA dehydratase PASTICCINO 2 (PAS2) of Arabidopsis thaliana (Mouse-ear cress).